A 302-amino-acid chain; its full sequence is Probable alpha-L-glutamate ligase (302 aa).

The region spanning 112–294 (LQLLLKTGVP…IAAEIIDYIE (183 aa)) is the ATP-grasp domain. Residues lysine 148, 185–186 (DF), aspartate 194, and 218–220 (RAN) each bind ATP. 3 residues coordinate Mg(2+): aspartate 255, glutamate 267, and asparagine 269. Positions 255, 267, and 269 each coordinate Mn(2+).

The protein belongs to the RimK family. Mg(2+) is required as a cofactor. It depends on Mn(2+) as a cofactor.

The chain is Probable alpha-L-glutamate ligase from Haemophilus influenzae (strain 86-028NP).